The chain runs to 1023 residues: FHIP family protein AGAP011705 (1023 aa).

Polar residues-rich tracts occupy residues 1-13 (MSWL…RQSF), 806-825 (SMTS…SSSY), and 868-888 (GLNH…ASMN). Disordered regions lie at residues 1 to 39 (MSWL…AGGG) and 797 to 927 (GKLL…AETQ). The span at 889–906 (VPSPVGQQQHQHQSVSSV) shows a compositional bias: low complexity.

It belongs to the FHIP family.

The chain is FHIP family protein AGAP011705 from Anopheles gambiae (African malaria mosquito).